Consider the following 340-residue polypeptide: DNA-directed RNA polymerase subunit alpha (340 aa).

The segment at 1-236 is alpha N-terminal domain (alpha-NTD); sequence MLSLSKNWNT…EQLQLFISFE (236 aa). The interval 251–340 is alpha C-terminal domain (alpha-CTD); the sequence is FAPYLLKRVD…LSKRYEDSYN (90 aa).

This sequence belongs to the RNA polymerase alpha chain family. As to quaternary structure, homodimer. The RNAP catalytic core consists of 2 alpha, 1 beta, 1 beta' and 1 omega subunit. When a sigma factor is associated with the core the holoenzyme is formed, which can initiate transcription.

It carries out the reaction RNA(n) + a ribonucleoside 5'-triphosphate = RNA(n+1) + diphosphate. Its function is as follows. DNA-dependent RNA polymerase catalyzes the transcription of DNA into RNA using the four ribonucleoside triphosphates as substrates. This Rickettsia peacockii (strain Rustic) protein is DNA-directed RNA polymerase subunit alpha.